Consider the following 213-residue polypeptide: General transcription factor 3C polypeptide 6 (213 aa).

The segment covering 1 to 11 has biased composition (basic and acidic residues); it reads MAAAADERSPE. Disordered regions lie at residues 1–20 and 191–213; these read MAAA…EEEE and SGPL…QMLP. Ala-2 carries the post-translational modification N-acetylalanine. Ser-9 is modified (phosphoserine).

It belongs to the TFIIIC subunit 6 family. As to quaternary structure, part of the TFIIIC subcomplex TFIIIC2, consisting of six subunits, GTF3C1, GTF3C2, GTF3C3, GTF3C4, GTF3C5 and GTF3C6. Interacts with GTF3C4 and GTF3C5.

The protein localises to the nucleus. Its function is as follows. Involved in RNA polymerase III-mediated transcription. Integral, tightly associated component of the DNA-binding TFIIIC2 subcomplex that directly binds tRNA and virus-associated RNA promoters. This Homo sapiens (Human) protein is General transcription factor 3C polypeptide 6 (GTF3C6).